The chain runs to 237 residues: MALKTLPIEARPRERLLARGPSSLSDTELLAILLRTGIVGKGVMQMAQELLSPALPDPATGALRGGFGGIGGLLQADADALKRIKGLGPAKRTSLVAVLELARRMLAQTLPKRDLFHSPRAVRDYLQLHLGGKPHEVFSVLFLDSQNGLIAMEEMFRGTLSQASVYPREVVVRALHHHAAAVVLVHNHPSGQVQPSRADETLTRSLTDALRLVDVRVLDHIIVAPGSSLSMAEEGLI.

Residues Leu115–Ile237 enclose the MPN domain. The Zn(2+) site is built by His186, His188, and Asp199. Residues His186–Asp199 carry the JAMM motif motif.

Belongs to the UPF0758 family.

The polypeptide is UPF0758 protein Aave_3773 (Paracidovorax citrulli (strain AAC00-1) (Acidovorax citrulli)).